Reading from the N-terminus, the 450-residue chain is Glucose-6-phosphate isomerase (450 aa).

Residue Glu291 is the Proton donor of the active site. Active-site residues include His312 and Lys426.

It belongs to the GPI family.

Its subcellular location is the cytoplasm. It carries out the reaction alpha-D-glucose 6-phosphate = beta-D-fructose 6-phosphate. It functions in the pathway carbohydrate biosynthesis; gluconeogenesis. The protein operates within carbohydrate degradation; glycolysis; D-glyceraldehyde 3-phosphate and glycerone phosphate from D-glucose: step 2/4. Functionally, catalyzes the reversible isomerization of glucose-6-phosphate to fructose-6-phosphate. This chain is Glucose-6-phosphate isomerase, found in Clostridium botulinum (strain Langeland / NCTC 10281 / Type F).